The chain runs to 162 residues: Sorting nexin-3 (162 aa).

Residues 1 to 23 (MPREFKSFGSTEKSLLSKGHGEP) form a disordered region. In terms of domain architecture, PX spans 38–161 (IEVHNPKTHI…VRFIEAEKFV (124 aa)). Residues R81, S83, K112, and R127 each coordinate a 1,2-diacyl-sn-glycero-3-phospho-(1D-myo-inositol-3-phosphate).

The protein belongs to the sorting nexin family. Monomer. Interacts with RBD2, YIF1, YIP1 and YIP5.

Its subcellular location is the cytoplasm. It localises to the golgi apparatus membrane. It is found in the prevacuolar compartment membrane. In terms of biological role, required for retention of late Golgi membrane proteins. Component of the retrieval machinery that functions by direct interaction with the cytosolic tails of certain TGN membrane proteins during the sorting/budding process at the prevacuolar compartment. Binds phosphatidylinositol 3-phosphate (PtdIns(P3)). This chain is Sorting nexin-3 (SNX3), found in Saccharomyces cerevisiae (strain ATCC 204508 / S288c) (Baker's yeast).